The chain runs to 134 residues: Cytochrome b (134 aa).

3 helical membrane passes run 33–53 (FGSLLGVCLIIQILTGLFLAM), 77–98 (WLIRYLHANGASMFFICLFLHV), and 113–133 (WNIGVLLLFAVMATAFMGYVL). Positions 83 and 97 each coordinate heme b.

Belongs to the cytochrome b family. As to quaternary structure, the cytochrome bc1 complex contains 11 subunits: 3 respiratory subunits (MT-CYB, CYC1 and UQCRFS1), 2 core proteins (UQCRC1 and UQCRC2) and 6 low-molecular weight proteins (UQCRH/QCR6, UQCRB/QCR7, UQCRQ/QCR8, UQCR10/QCR9, UQCR11/QCR10 and a cleavage product of UQCRFS1). This cytochrome bc1 complex then forms a dimer. Heme b is required as a cofactor.

Its subcellular location is the mitochondrion inner membrane. Component of the ubiquinol-cytochrome c reductase complex (complex III or cytochrome b-c1 complex) that is part of the mitochondrial respiratory chain. The b-c1 complex mediates electron transfer from ubiquinol to cytochrome c. Contributes to the generation of a proton gradient across the mitochondrial membrane that is then used for ATP synthesis. This chain is Cytochrome b (MT-CYB), found in Sorex shinto sadonis (Sado shrew).